Consider the following 315-residue polypeptide: Protein phosphatase PTC7 homolog fig (315 aa).

In terms of domain architecture, PPM-type phosphatase spans 54–309 (KHSIASAKDN…DDITVILATV (256 aa)). The Mn(2+) site is built by aspartate 86, glycine 87, and aspartate 231.

The protein belongs to the PP2C family. Mg(2+) is required as a cofactor. Requires Mn(2+) as cofactor.

It carries out the reaction O-phospho-L-seryl-[protein] + H2O = L-seryl-[protein] + phosphate. The catalysed reaction is O-phospho-L-threonyl-[protein] + H2O = L-threonyl-[protein] + phosphate. In Drosophila willistoni (Fruit fly), this protein is Protein phosphatase PTC7 homolog fig.